Here is a 415-residue protein sequence, read N- to C-terminus: Lipoyl synthase, mitochondrial (415 aa).

A mitochondrion-targeting transit peptide spans 1 to 33; the sequence is MAASTSHLRSLCSSTRSLSRSGVIVTPIACRGY. Residues C132, C137, C143, C163, C167, C170, and S378 each coordinate [4Fe-4S] cluster. Residues 148 to 367 enclose the Radical SAM core domain; it reads DKSSATATIM…RQRALEMGFL (220 aa).

It belongs to the radical SAM superfamily. Lipoyl synthase family. [4Fe-4S] cluster serves as cofactor.

The protein localises to the mitochondrion. It carries out the reaction [[Fe-S] cluster scaffold protein carrying a second [4Fe-4S](2+) cluster] + N(6)-octanoyl-L-lysyl-[protein] + 2 oxidized [2Fe-2S]-[ferredoxin] + 2 S-adenosyl-L-methionine + 4 H(+) = [[Fe-S] cluster scaffold protein] + N(6)-[(R)-dihydrolipoyl]-L-lysyl-[protein] + 4 Fe(3+) + 2 hydrogen sulfide + 2 5'-deoxyadenosine + 2 L-methionine + 2 reduced [2Fe-2S]-[ferredoxin]. The protein operates within protein modification; protein lipoylation via endogenous pathway; protein N(6)-(lipoyl)lysine from octanoyl-[acyl-carrier-protein]: step 2/2. In terms of biological role, catalyzes the radical-mediated insertion of two sulfur atoms into the C-6 and C-8 positions of the octanoyl moiety bound to the lipoyl domains of lipoate-dependent enzymes, thereby converting the octanoylated domains into lipoylated derivatives. The protein is Lipoyl synthase, mitochondrial of Aspergillus clavatus (strain ATCC 1007 / CBS 513.65 / DSM 816 / NCTC 3887 / NRRL 1 / QM 1276 / 107).